Consider the following 464-residue polypeptide: MDYGDFVIEKEISYSINFSQDLLYKILNSYIVPNYSLAQQYFDLYDENGFRTRIPIQSACNNIISSVKKTNSKHKKFVYWPKDTNALVPLVWRESKEIKLPYKTLSHNLSKIIKVYVYQHDKIEIKFEHVYFSKSDIDLFDSTMANKISKLLTLLENGDASETLQNSQVGSDEILARIRLEYEFDDDAPDDAQLNVMCNIIADMEALTDAQNISPFVPLTTLIDKMAPRKFEREQKIVYGDDAFDNASVKKWALKLDGMRGRGLFMRNFCIIQTDDMQFYKTKMANLFALNNIVAFQCEVMDKQKIYITDLLQVFKYKYNNRTQYECGVNASYAIDPVTAIECINYMNNNVQSVTLTDTCPAIELRFQQFFDPPLQQSNYMTVSVDGYVVLDTELRYVKYKWMPTTELEYDAVNKSFNTLNGPLNGLMILTDLPELLHENIYECVITDTTINVLKHRRDRIVPN.

The segment at 1–204 (MDYGDFVIEK…NVMCNIIADM (204 aa)) is mRNA triphosphatase. The interval 205–464 (EALTDAQNIS…KHRRDRIVPN (260 aa)) is mRNA guanylyltransferase. The N6-GMP-lysine intermediate role is filled by K255.

It belongs to the baculoviridae LEF-4 family. As to quaternary structure, interacts with LEF-8, LEF-9, and p47.

The protein resides in the host cytoplasm. It localises to the host nucleus. It catalyses the reaction a 5'-end diphospho-ribonucleoside in mRNA + GTP + H(+) = a 5'-end (5'-triphosphoguanosine)-ribonucleoside in mRNA + diphosphate. The catalysed reaction is a 5'-end triphospho-ribonucleoside in mRNA + H2O = a 5'-end diphospho-ribonucleoside in mRNA + phosphate + H(+). Component of the viral DNA-dependent RNA polymerase that catalyzes two reactions involved in viral RNA cap formation: an RNA 5'-triphosphatase that hydrolyzes the gamma phosphate of triphosphate-terminated RNA and a guanylyltransferase that reacts with GTP to form a covalent protein-guanylate adduct. Therefore plays an essential role in late and very late gene expression. The sequence is that of mRNA capping enzyme LEF-4 (LEF-4) from Autographa californica nuclear polyhedrosis virus (AcMNPV).